We begin with the raw amino-acid sequence, 783 residues long: Polyribonucleotide nucleotidyltransferase 1, mitochondrial (783 aa).

The N-terminal 45 residues, 1–45 (MAACRYCCSCLRLRPLSDGPFLLPRRDRALTQLQVRALWSSAGSR), are a transit peptide targeting the mitochondrion. Residues Lys250, Lys264, Lys285, and Lys289 each carry the N6-acetyllysine modification. Lys552 carries the N6-succinyllysine modification. Positions 605 to 664 (PVVETVQVPLSKRAKFVGPGGYNLKKLQAETGVTISQVDEETFSVFAPTPSAMHEARDFI) constitute a KH domain. An S1 motif domain is found at 679–750 (GAVYTATITE…ADGRMRLSRK (72 aa)). Ser754 and Ser782 each carry phosphoserine.

It belongs to the polyribonucleotide nucleotidyltransferase family. In terms of assembly, homotrimer; in free form. Homooligomer. Component of the mitochondrial degradosome (mtEXO) complex which is a heteropentamer containing 2 copies of SUPV3L1 and 3 copies of PNPT1. As part of the mitochondrial degradosome complex, interacts with GRSF1 in an RNA-dependent manner; the interaction enhances the activity of the complex. Interacts with TCL1A; the interaction has no effect on PNPT1 exonuclease activity.

Its subcellular location is the cytoplasm. The protein localises to the mitochondrion matrix. It localises to the mitochondrion intermembrane space. It carries out the reaction RNA(n+1) + phosphate = RNA(n) + a ribonucleoside 5'-diphosphate. Functionally, RNA-binding protein implicated in numerous RNA metabolic processes. Catalyzes the phosphorolysis of single-stranded polyribonucleotides processively in the 3'-to-5' direction. Mitochondrial intermembrane factor with RNA-processing exoribonulease activity. Component of the mitochondrial degradosome (mtEXO) complex, that degrades 3' overhang double-stranded RNA with a 3'-to-5' directionality in an ATP-dependent manner. Involved in the degradation of non-coding mitochondrial transcripts (MT-ncRNA) and tRNA-like molecules. Required for correct processing and polyadenylation of mitochondrial mRNAs. Plays a role as a cytoplasmic RNA import factor that mediates the translocation of small RNA components, like the 5S RNA, the RNA subunit of ribonuclease P and the mitochondrial RNA-processing (MRP) RNA, into the mitochondrial matrix. Plays a role in mitochondrial morphogenesis and respiration; regulates the expression of the electron transport chain (ETC) components at the mRNA and protein levels. In the cytoplasm, shows a 3'-to-5' exoribonuclease mediating mRNA degradation activity; degrades c-myc mRNA upon treatment with IFNB1/IFN-beta, resulting in a growth arrest in melanoma cells. Regulates the stability of specific mature miRNAs in melanoma cells; specifically and selectively degrades miR-221, preferentially. Also plays a role in RNA cell surveillance by cleaning up oxidized RNAs. Binds to the RNA subunit of ribonuclease P, MRP RNA and miR-221 microRNA. This is Polyribonucleotide nucleotidyltransferase 1, mitochondrial from Homo sapiens (Human).